A 104-amino-acid polypeptide reads, in one-letter code: ATP-dependent Clp protease adapter protein ClpS (104 aa).

This sequence belongs to the ClpS family. Binds to the N-terminal domain of the chaperone ClpA.

Its function is as follows. Involved in the modulation of the specificity of the ClpAP-mediated ATP-dependent protein degradation. This Burkholderia mallei (strain NCTC 10247) protein is ATP-dependent Clp protease adapter protein ClpS.